Reading from the N-terminus, the 262-residue chain is Short-chain Z-isoprenyl diphosphate synthase (262 aa).

Residue Asp-40 is part of the active site. Residue Asp-40 participates in Mg(2+) binding. Residues 41–44 (GNRR), Trp-45, and 86–88 (STE) each bind substrate. The Proton acceptor role is filled by Asn-89. Residues Arg-92, Arg-211, and 217–219 (RLS) contribute to the substrate site. Mg(2+) is bound at residue Glu-230.

Belongs to the UPP synthase family. Z-FPP synthase subfamily. Mg(2+) is required as a cofactor.

It catalyses the reaction isopentenyl diphosphate + (2E)-geranyl diphosphate = (2Z,6E)-farnesyl diphosphate + diphosphate. Its pathway is phospholipid metabolism; decaprenyl phosphate biosynthesis. In terms of biological role, generates Z-farnesyl diphosphate (Z-FPP) from isopentenyl pyrophosphate (IPP). Z-FPP is the precursor of decaprenyl diphosphate, which has a central role in the biosynthesis of the mycobacterial cell wall. This chain is Short-chain Z-isoprenyl diphosphate synthase, found in Mycobacterium bovis (strain ATCC BAA-935 / AF2122/97).